The chain runs to 418 residues: Actin-related protein 3-B (418 aa).

Belongs to the actin family. ARP3 subfamily. Component of the Arp2/3 complex composed of actr2/arp2, actr3/arp3, arpc1 (arpc1a or arpc1b), arpc2, arpc3, arpc4 and arpc5.

It localises to the cytoplasm. The protein resides in the cytoskeleton. Its subcellular location is the cell projection. It is found in the nucleus. Functionally, ATP-binding component of the Arp2/3 complex, a multiprotein complex that mediates actin polymerization upon stimulation by nucleation-promoting factor (NPF). The Arp2/3 complex mediates the formation of branched actin networks in the cytoplasm, providing the force for cell motility. Seems to contact the pointed end of the daughter actin filament. In addition to its role in the cytoplasmic cytoskeleton, the Arp2/3 complex also promotes actin polymerization in the nucleus, thereby regulating gene transcription and repair of damaged DNA. The Arp2/3 complex promotes homologous recombination (HR) repair in response to DNA damage by promoting nuclear actin polymerization, leading to drive motility of double-strand breaks (DSBs). The protein is Actin-related protein 3-B (actr3-b) of Xenopus laevis (African clawed frog).